Here is a 158-residue protein sequence, read N- to C-terminus: C-type lectin galactose-binding isoform (158 aa).

An N-terminal signal peptide occupies residues 1–23 (MGRFLLVTLSLLVMAFFLNGANS). 3 cysteine pairs are disulfide-bonded: Cys26-Cys37, Cys54-Cys154, and Cys129-Cys146. Residues 33 to 155 (RNGFCYKVFN…CTALRPFLCQ (123 aa)) enclose the C-type lectin domain. The Ca(2+) site is built by Gln119, Asp121, and Glu127. Residues 119 to 121 (QPD) carry the Galactose-binding motif. An N-linked (GlcNAc...) asparagine glycan is attached at Asn134. Ca(2+) is bound by residues Asn142 and Asp143.

It belongs to the true venom lectin family. As to quaternary structure, dimer. Probably disulfide-linked homodimer. As to expression, expressed by the venom gland.

The protein localises to the secreted. Galactose-binding lectin that binds to and agglutinates erythrocytes in a calcium-dependent manner. In Pseudechis australis (Mulga snake), this protein is C-type lectin galactose-binding isoform.